The following is a 6629-amino-acid chain: Replicase polyprotein 1ab (6629 aa).

Residues 1-1750 lie on the Cytoplasmic side of the membrane; sequence MASSLKQGVS…VASYKTVLCK (1750 aa). Positions 675 to 780 constitute a Ubiquitin-like 1 domain; sequence KTVTFGETTV…SCHLIYRDYE (106 aa). The interval 783–802 is disordered; that stretch reads DDIEEEDAEECDTDSGEAEE. One can recognise a Macro domain in the interval 1003–1179; that stretch reads VKPATCEKPK…YFDVTCKQKT (177 aa). The Ubiquitin-like 2 domain maps to 1175–1227; it reads CKQKTIYLTEDGVKYRSIVLKPGDSLGQFGQVYAKNKIVFTADDVEDKEILYV. In terms of domain architecture, Peptidase C16 spans 1236–1497; sequence EYYGLDAQKY…SKSVKEDVSN (262 aa). Cysteine 1274 serves as the catalytic For PL-PRO activity. Residues cysteine 1353, cysteine 1355, cysteine 1387, and cysteine 1390 each contribute to the Zn(2+) site. A C4-type; degenerate zinc finger spans residues 1353 to 1390; it reads CNCGIKSYELRGLEACIQPVRATNLLHFKTQYSNCPTC. Catalysis depends on for PL-PRO activity residues histidine 1437 and aspartate 1448. A helical membrane pass occupies residues 1751-1771; the sequence is VVLATLLIVWFVYTSNPVMFT. The interval 1751 to 1864 is HD1; it reads VVLATLLIVW…KPVAGFVIIC (114 aa). In terms of domain architecture, 3Ecto spans 1769–1833; the sequence is MFTGIRVLDF…AYSVEQVYKD (65 aa). The Lumenal segment spans residues 1772–1843; it reads GIRVLDFLFE…AASGFIFNWN (72 aa). Cystine bridges form between cysteine 1785–cysteine 1811 and cysteine 1802–cysteine 1808. Residues 1844–1864 form a helical membrane-spanning segment; the sequence is WLYLVFLILFVKPVAGFVIIC. Over 1865–2280 the chain is Cytoplasmic; sequence YCVKYLVLNS…TFKCFKSYFK (416 aa). A Y1 region spans residues 1911–2001; it reads YIQVHHILYC…KLKRHVKPTA (91 aa). The CoV Nsp3 Y domain maps to 1911–2263; it reads YIQVHHILYC…HTQKLLVEKK (353 aa). Zn(2+)-binding residues include histidine 1915, cysteine 1920, cysteine 1925, cysteine 1928, cysteine 1961, histidine 1964, cysteine 1968, and cysteine 1971. The interval 1915-1928 is ZF1; that stretch reads HHILYCKDVTCEVC. Residues 1961–1971 form a ZF2 region; sequence CKRHNWYCRNC. Residues 2002 to 2104 form a Y2 region; that stretch reads YAYHVVDEAC…ILDQALYEQL (103 aa). Residues 2002-2263 form a coV-Y region; the sequence is YAYHVVDEAC…HTQKLLVEKK (262 aa). A Y3 region spans residues 2105 to 2163; it reads VVEPVSKSVIDKVCSILSSIISVDTAALNYKAGTLRDALLSITKDEEAVDMAIFCHNHD. The tract at residues 2164–2263 is Y4; sequence VDYTGDGFTN…HTQKLLVEKK (100 aa). The helical transmembrane segment at 2281-2301 threads the bilayer; the sequence is WLLIFYILFTACCSGYYYMEV. An HD2 region spans residues 2281 to 2664; it reads WLLIFYILFT…LACCYLGFII (384 aa). Residues 2302–2559 are Lumenal-facing; the sequence is SKSFVHPMYD…FFTGVNPNIY (258 aa). Residues 2560–2580 traverse the membrane as a helical segment; the sequence is MQLATMFLILVVVVLIFAMVI. Over 2581 to 2611 the chain is Cytoplasmic; it reads KFQGVFKAYATTVFITMLVWVINAFILCVHS. The chain crosses the membrane as a helical span at residues 2612–2632; sequence YNSVLAVILLVLYCYASLVTS. Topologically, residues 2633-2643 are lumenal; the sequence is RNTVIIMHCWL. A helical transmembrane segment spans residues 2644 to 2664; sequence VFTFGLIVPTWLACCYLGFII. The Cytoplasmic segment spans residues 2665 to 3096; the sequence is YMYTPLFLWC…SSFVRKATSW (432 aa). Residues 2684–2779 enclose the Nsp4C domain; that stretch reads LYDGNEFVGN…RYSIGVSRLQ (96 aa). A Peptidase C30 domain is found at 2780 to 3086; sequence SGFKKLVSPS…FNQIGGVRLQ (307 aa). Catalysis depends on for 3CL-PRO activity residues histidine 2820 and cysteine 2922. Residues 3097–3117 form a helical membrane-spanning segment; sequence FWSRCVLACFLFVLCAIVLFT. The interval 3097 to 3317 is HD3; it reads FWSRCVLACF…WLCTCYFGLY (221 aa). Residues 3118–3121 lie on the Lumenal side of the membrane; sequence AVPL. The chain crosses the membrane as a helical span at residues 3122–3142; that stretch reads KFYVYAAVILLMAVLFISFTV. Residues 3143–3151 lie on the Cytoplasmic side of the membrane; it reads KHVMAYMDT. A helical transmembrane segment spans residues 3152-3172; it reads FLLPTLITVIIGVCAEVPFIY. Residues 3173–3188 lie on the Lumenal side of the membrane; sequence NTLISQVVIFLSQWYD. A helical transmembrane segment spans residues 3189-3209; that stretch reads PVVFDTMVPWMFLPLVLYTAF. Topologically, residues 3210-3257 are cytoplasmic; the sequence is KCVQGCYMNSFNTSLLMLYQFVKLGFVIYTSSNTLTAYTEGNWELFFE. Residues 3258-3278 form a helical membrane-spanning segment; that stretch reads LVHTTVLANVSSNSLIGLFVF. The Lumenal portion of the chain corresponds to 3279-3296; the sequence is KCAKWMLYYCNATYLNNY. Residues 3297-3317 form a helical membrane-spanning segment; the sequence is VLMAVMVNCIGWLCTCYFGLY. The Cytoplasmic portion of the chain corresponds to 3318–6629; the sequence is WWVNKVFGLT…FTSDSFVCTM (3312 aa). The region spanning 3380-3462 is the RdRp Nsp7 cofactor domain; sequence AKLSDVKCTT…DILKRSTVLQ (83 aa). Positions 3463-3672 constitute a RdRp Nsp8 cofactor domain; sequence SVTQEFSHIP…GHNKVDVVLQ (210 aa). The 111-residue stretch at 3673–3783 folds into the Nsp9 ssRNA-binding domain; sequence NNELMPHGVK…GAISNVVVLQ (111 aa). The 142-residue stretch at 3785-3926 folds into the ExoN/MTase coactivator domain; it reads KGHETEEVDA…CDSLRQPKSS (142 aa). Residues cysteine 3858, cysteine 3861, histidine 3867, cysteine 3878, cysteine 3904, cysteine 3907, cysteine 3915, and cysteine 3917 each coordinate Zn(2+). 2 zinc fingers span residues 3858-3878 and 3904-3917; these read CLYC…DGRC and CTVC…GCQC. A NiRAN domain is found at 3940 to 4198; sequence YLNRVRGSSE…APERYFEYDV (259 aa). A Nsp12 Interface domain is found at 4203–4301; sequence KSYDLLKYDY…MNQDNTMSFS (99 aa). The Zn(2+) site is built by histidine 4232, cysteine 4238, cysteine 4243, cysteine 4247, and cysteine 4424. Residues 4302-4868 enclose the Nsp12 RNA-dependent RNA polymerase domain; the sequence is KMGLSQLMQF…NMYRAPTTLQ (567 aa). Residues 4304-4517 are rdRp Fingers N-ter; the sequence is GLSQLMQFVG…HQKILKSIVN (214 aa). Residues 4518–4556 are rdRp Palm N-ter; it reads TRNASVVIGTTKFYGGWDNMLRNLIQGVEDPILMGWDYP. In terms of domain architecture, RdRp catalytic spans 4548–4710; that stretch reads PILMGWDYPK…CYNNTLAKQG (163 aa). The tract at residues 4557 to 4615 is rdRp Fingers C-ter; it reads KCDRAMPNLLRIAASLVLARKHTNCCSWSERIYRLYNECAQVLSETVLATGGIYVKPGG. Positions 4578, 4581, and 4582 each coordinate Zn(2+). Positions 4616-4751 are rdRp Palm C-ter; sequence TSSGDATTAY…EKGPHEFCSQ (136 aa). Catalysis depends on residues serine 4695, aspartate 4696, and aspartate 4697. The tract at residues 4752 to 4868 is rdRp Thumb; sequence HTMLVEVDGE…NMYRAPTTLQ (117 aa). Positions 4869 to 4981 constitute a CV ZBD domain; that stretch reads SCGVCVVCNS…DDFNQLATTN (113 aa). Zn(2+)-binding residues include cysteine 4873, cysteine 4876, cysteine 4884, cysteine 4887, cysteine 4894, cysteine 4897, histidine 4901, histidine 4907, cysteine 4918, cysteine 4923, cysteine 4940, and histidine 4943. The (+)RNA virus helicase ATP-binding domain maps to 5125–5305; that stretch reads MVPECFVNNI…MVCVKPDIFL (181 aa). Residue 5150–5157 participates in ATP binding; it reads GPPGSGKS. In terms of domain architecture, (+)RNA virus helicase C-terminal spans 5306–5477; it reads AKCYRCPKEI…QGTGLFKICN (172 aa). The ExoN domain maps to 5539–5753; it reads MFITRDEAIR…RCLAINNAFC (215 aa). Residues aspartate 5557, glutamate 5559, and glutamate 5658 contribute to the active site. The Zn(2+) site is built by cysteine 5674, cysteine 5676, cysteine 5692, histidine 5695, histidine 5723, cysteine 5727, and histidine 5730. Residues histidine 5734 and aspartate 5739 contribute to the active site. Cysteine 5745 contributes to the Zn(2+) binding site. In terms of domain architecture, N7-MTase spans 5762–5989; sequence YPHIANEDEV…NLWKSFSALQ (228 aa). 5797–5803 serves as a coordination point for S-adenosyl-L-methionine; that stretch reads DIGNPKG. The tract at residues 5877 to 5891 is gpppA-binding; it reads CNGGSLYVNKHAFYT. Zn(2+) is bound by residues cysteine 5915, cysteine 5935, cysteine 5946, and histidine 5949. In terms of domain architecture, Nsp15 N-terminal oligomerization spans 5990–6050; that stretch reads SIDNIAYNMY…SVAFELYAKR (61 aa). An AV-Nsp11N/CoV-Nsp15M domain is found at 6051–6166; that stretch reads NIRTLPNNRI…VYKRVNGAFV (116 aa). One can recognise a NendoU domain in the interval 6183-6324; it reads EPRSDIERDF…EDGSIKTCYP (142 aa). Residues histidine 6212, histidine 6227, lysine 6267, lysine 6371, aspartate 6455, lysine 6499, and glutamate 6532 contribute to the active site. The region spanning 6327–6626 is the Nidovirus-type SAM-dependent 2'-O-MTase domain; that stretch reads QSAWTCGYNM…NTSFTSDSFV (300 aa).

The protein belongs to the coronaviruses polyprotein 1ab family. In terms of assembly, interacts with host PHB and PHB2. Interacts with papain-like protease and non-structural protein 6. As to quaternary structure, monomer. Homodimer. Only the homodimer shows catalytic activity. In terms of assembly, eight copies of nsp7 and eight copies of nsp8 assemble to form a heterohexadecamer dsRNA-encircling ring structure. Eight copies of nsp7 and eight copies of nsp8 assemble to form a heterohexadecamer dsRNA-encircling ring structure. Interacts with ORF6 protein. As to quaternary structure, homodimer. In terms of assembly, homododecamer. Interacts with proofreading exoribonuclease nsp14 and 2'-O-methyltransferase nsp16; these interactions enhance nsp14 and nsp16 enzymatic activities. Interacts with host DDX1 (via C-terminus). Interacts with non-structural protein 10. As to quaternary structure, homohexamer. In terms of assembly, interacts with non-structural protein 10. The cofactor is Mn(2+). Zn(2+) is required as a cofactor. Post-translationally, specific enzymatic cleavages in vivo by its own proteases yield mature proteins. 3C-like proteinase nsp5 liberates nsps 6-16 from the polyprotein. Papain-like and 3C-like proteinases are autocatalytically processed. In terms of processing, N-glycosylated.

It is found in the host endoplasmic reticulum membrane. The protein resides in the host cytoplasm. The protein localises to the host perinuclear region. Its subcellular location is the host endoplasmic reticulum. It localises to the host endoplasmic reticulum-Golgi intermediate compartment. It catalyses the reaction Thiol-dependent hydrolysis of ester, thioester, amide, peptide and isopeptide bonds formed by the C-terminal Gly of ubiquitin (a 76-residue protein attached to proteins as an intracellular targeting signal).. The enzyme catalyses RNA(n) + a ribonucleoside 5'-triphosphate = RNA(n+1) + diphosphate. The catalysed reaction is ATP + H2O = ADP + phosphate + H(+). It carries out the reaction uridylyl-uridylyl-ribonucleotide-RNA = a 3'-end uridylyl-2',3'-cyclophospho-uridine-RNA + a 5'-end dephospho-ribonucleoside-RNA. It catalyses the reaction a 5'-end diphospho-ribonucleoside in mRNA + GTP + H(+) = a 5'-end (5'-triphosphoguanosine)-ribonucleoside in mRNA + diphosphate. The enzyme catalyses a 5'-end (N(7)-methyl 5'-triphosphoguanosine)-ribonucleoside in mRNA + S-adenosyl-L-methionine = a 5'-end (N(7)-methyl 5'-triphosphoguanosine)-(2'-O-methyl-ribonucleoside) in mRNA + S-adenosyl-L-homocysteine + H(+). Its function is as follows. Multifunctional protein involved in the transcription and replication of viral RNAs. Contains the proteinases responsible for the cleavages of the polyprotein. Functionally, may play a role in the modulation of host cell survival signaling pathway by interacting with host PHB and PHB2. Indeed, these two proteins play a role in maintaining the functional integrity of the mitochondria and protecting cells from various stresses. Responsible for the cleavages located at the N-terminus of the replicase polyprotein. In addition, PL-PRO possesses a deubiquitinating/deISGylating activity and processes both 'Lys-48'- and 'Lys-63'-linked polyubiquitin chains from cellular substrates. In terms of biological role, plays a role in host membrane rearrangement that leads to creation of cytoplasmic double-membrane vesicles (DMV) necessary for viral replication. Alone is able to induce paired membranes. Coexpression of nsp3 and nsp4 does not result in the formation of DMVs. Its function is as follows. Responsible for the majority of cleavages as it cleaves the C-terminus of replicase polyprotein at 11 sites. Recognizes substrates containing the core sequence [ILMVF]-Q-|-[SGACN]. Inhibited by the substrate-analog Cbz-Val-Asn-Ser-Thr-Leu-Gln-CMK. Functionally, forms a hexadecamer with nsp8 (8 subunits of each) that may participate in viral replication by acting as a primase. Alternatively, may synthesize substantially longer products than oligonucleotide primers. Forms a hexadecamer with nsp7 (8 subunits of each) that may participate in viral replication by acting as a primase. Alternatively, may synthesize substantially longer products than oligonucleotide primers. In terms of biological role, forms a primer, NSP9-pU, which is utilized by the polymerase for the initiation of RNA chains. Interacts with ribosome signal recognition particle RNA (SRP). Together with NSP8, suppress protein integration into the cell membrane, thereby disrupting host immune defenses. Its function is as follows. Plays a pivotal role in viral transcription by stimulating both nsp14 3'-5' exoribonuclease and nsp16 2'-O-methyltransferase activities. Therefore plays an essential role in viral mRNAs cap methylation. Functionally, RNA-directed RNA polymerase that catalyzes the transcription of viral genomic and subgenomic RNAs. Acts in complex with nsp7 and nsp8 to transcribe both the minus and positive strands of genomic RNA. The kinase-like NiRAN domain of NSP12 attaches one or more nucleotides to the amino terminus of NSP9, forming a covalent RNA-protein intermediate that serves as transcription/replication primer. Subgenomic RNAs (sgRNAs) are formed by discontinuous transcription: The polymerase has the ability to pause at transcription-regulating sequences (TRS) and jump to the leader TRS, resulting in a major deletion. This creates a series of subgenomic RNAs that are replicated, transcribed and translated. In addition, Nsp12 is a subunit of the viral RNA capping enzyme that catalyzes the RNA guanylyltransferase reaction for genomic and sub-genomic RNAs. Subsequently, the NiRAN domain transfers RNA to GDP, and forms the core cap structure GpppA-RNA. Multi-functional protein with a zinc-binding domain in N-terminus displaying RNA and DNA duplex-unwinding activities with 5' to 3' polarity. Activity of helicase is dependent on magnesium. In terms of biological role, enzyme possessing two different activities: an exoribonuclease activity acting on both ssRNA and dsRNA in a 3' to 5' direction and a N7-guanine methyltransferase activity. Acts as a proofreading exoribonuclease for RNA replication, thereby lowering The sensitivity of the virus to RNA mutagens. Its function is as follows. Plays a role in viral transcription/replication and prevents the simultaneous activation of host cell dsRNA sensors, such as MDA5/IFIH1, OAS, and PKR. Acts by degrading the 5'-polyuridines generated during replication of the poly(A) region of viral genomic and subgenomic RNAs. Catalyzes a two-step reaction in which a 2'3'-cyclic phosphate (2'3'-cP) is first generated by 2'-O transesterification, which is then hydrolyzed to a 3'-phosphate (3'-P). If not degraded, poly(U) RNA would hybridize with poly(A) RNA tails and activate host dsRNA sensors. Functionally, methyltransferase that mediates mRNA cap 2'-O-ribose methylation to the 5'-cap structure of viral mRNAs. N7-methyl guanosine cap is a prerequisite for binding of nsp16. Therefore plays an essential role in viral mRNAs cap methylation which is essential to evade immune system. The protein is Replicase polyprotein 1ab (rep) of Gallus gallus (Chicken).